A 66-amino-acid polypeptide reads, in one-letter code: Opicalcin-1 (66 aa).

A signal peptide spans 1–22 (MKPSLIIVTFIVVFMAISCVAA). Residues 23–31 (DDEQETWIE) constitute a propeptide that is removed on maturation. Intrachain disulfides connect Cys-36–Cys-50, Cys-43–Cys-54, and Cys-49–Cys-65. Residues 55–57 (KRR) are essential for stimulation of [3H]ryanodine binding to RYR1.

The protein belongs to the scorpion calcin family. In terms of tissue distribution, expressed by the venom gland.

The protein resides in the secreted. Functionally, this toxin stabilizes ryanodine receptor 1 (RyR1) opening in a long-lasting subconductance state (35% of the full conductance state). Furthermore, it triggers calcium release from sarcoplasmic vesicles (2 nM are enough to induce a sharp release, and 67% of the total calcium is released after toxin (100 nM) addition) probably by acting as a cell-penetrating peptide (CPP). In addition, it has been shown to dose-dependently stimulate ryanodine binding to RyR1 (EC(50)=0.3 nM). It also augments the bell-shaped calcium-[3H]ryanodine binding curve that is maximal at about 10 uM calcium concentration. It binds a different site as ryanodine. It acts synergistically with caffeine. In vivo, intracerebroventricular injection into mice induces neurotoxic symptoms, followed by death. The polypeptide is Opicalcin-1 (Opistophthalmus carinatus (African yellow leg scorpion)).